The primary structure comprises 194 residues: Adenylate kinase isoenzyme 1 (194 aa).

An N-acetylalanine modification is found at Ala2. Residue 18–23 participates in ATP binding; it reads GSGKGT. Residues 38 to 67 are NMP; it reads SSGDLLRAEVASGSERGKQLQAIMQKGELV. AMP contacts are provided by residues Ser39, Arg44, 65-67, 94-97, and Gln101; these read ELV and GYPR. The interval 131-141 is LID; the sequence is KRGQTSGRSDD. Arg132 contributes to the ATP binding site. The AMP site is built by Arg138 and Arg149. Position 177 (Leu177) interacts with ATP.

This sequence belongs to the adenylate kinase family. AK1 subfamily. Monomer. It depends on Mg(2+) as a cofactor.

The protein localises to the cytoplasm. It catalyses the reaction a ribonucleoside 5'-phosphate + ATP = a ribonucleoside 5'-diphosphate + ADP. The catalysed reaction is AMP + ATP = 2 ADP. The enzyme catalyses dAMP + ATP = dADP + ADP. It carries out the reaction dATP + AMP = dADP + ADP. It catalyses the reaction dAMP + dATP = 2 dADP. The catalysed reaction is a 2'-deoxyribonucleoside 5'-diphosphate + ATP = a 2'-deoxyribonucleoside 5'-triphosphate + ADP. The enzyme catalyses a ribonucleoside 5'-diphosphate + ATP = a ribonucleoside 5'-triphosphate + ADP. It carries out the reaction CDP + GTP = CTP + GDP. It catalyses the reaction GDP + ATP = GTP + ADP. The catalysed reaction is UDP + ATP = UTP + ADP. The enzyme catalyses GTP + UDP = UTP + GDP. It carries out the reaction dTDP + GTP = dTTP + GDP. It catalyses the reaction dCDP + GTP = dCTP + GDP. The catalysed reaction is dGDP + ATP = dGTP + ADP. The enzyme catalyses dADP + GTP = dATP + GDP. It carries out the reaction thiamine diphosphate + ADP = thiamine triphosphate + AMP. Its function is as follows. Catalyzes the reversible transfer of the terminal phosphate group between ATP and AMP. Also displays broad nucleoside diphosphate kinase activity. Plays an important role in cellular energy homeostasis and in adenine nucleotide metabolism. Also catalyzes at a very low rate the synthesis of thiamine triphosphate (ThTP) from thiamine diphosphate (ThDP) and ADP. This chain is Adenylate kinase isoenzyme 1 (ak1), found in Cyprinus carpio (Common carp).